Here is a 315-residue protein sequence, read N- to C-terminus: Lamassu protein LmuA (315 aa).

Functionally, component of antiviral defense system Lamassu type I, composed of LmuA and LmuB. Expression of Lamassu type I in B.subtilis (strain BEST7003) confers resistance to phages phi3T, SpBeta and SPR. The chain is Lamassu protein LmuA from Bacillus sp. (strain NCIM 5461 / CCTCC AB 2011126 / NIO-1130).